The sequence spans 68 residues: DNA-directed RNA polymerase subunit Rpo10 (68 aa).

The Zn(2+) site is built by C7, C10, C44, and C45.

The protein belongs to the archaeal Rpo10/eukaryotic RPB10 RNA polymerase subunit family. Part of the RNA polymerase complex. Zn(2+) is required as a cofactor.

The protein resides in the cytoplasm. The enzyme catalyses RNA(n) + a ribonucleoside 5'-triphosphate = RNA(n+1) + diphosphate. Its function is as follows. DNA-dependent RNA polymerase (RNAP) catalyzes the transcription of DNA into RNA using the four ribonucleoside triphosphates as substrates. The polypeptide is DNA-directed RNA polymerase subunit Rpo10 (Methanococcus vannielii (strain ATCC 35089 / DSM 1224 / JCM 13029 / OCM 148 / SB)).